A 149-amino-acid chain; its full sequence is MKQVDIKLFDPRLKDCFPGYATPGSAGLDLRACIDERTEIHPGETLLIPSGIAIHLANPGFAAVVLPRSGLGHKHGIVLGNLVGLIDSDYQGQILVSCWNRGQTTFALEPLERIAQLVIVPVIQASFNVVNDFQHSQRGERGFGSTGKC.

Substrate-binding positions include 68-70 (RSG), N81, and 85-87 (LID).

Belongs to the dUTPase family. Mg(2+) is required as a cofactor.

It carries out the reaction dUTP + H2O = dUMP + diphosphate + H(+). It participates in pyrimidine metabolism; dUMP biosynthesis; dUMP from dCTP (dUTP route): step 2/2. In terms of biological role, this enzyme is involved in nucleotide metabolism: it produces dUMP, the immediate precursor of thymidine nucleotides and it decreases the intracellular concentration of dUTP so that uracil cannot be incorporated into DNA. The polypeptide is Deoxyuridine 5'-triphosphate nucleotidohydrolase (Nitrosomonas eutropha (strain DSM 101675 / C91 / Nm57)).